Consider the following 340-residue polypeptide: Ketol-acid reductoisomerase (NADP(+)) (340 aa).

A KARI N-terminal Rossmann domain is found at 3–183; it reads INVFYDKDCN…GGGRTGIIET (181 aa). NADP(+) contacts are provided by residues 26-29, R49, S54, and 84-87; these read FGSQ and DENQ. The active site involves H109. G135 is an NADP(+) binding site. Residues 184–329 enclose the KARI C-terminal knotted domain; the sequence is TFKDETETDL…VKLRNMMPWI (146 aa). D192, E196, E228, and E232 together coordinate Mg(2+). S253 provides a ligand contact to substrate.

It belongs to the ketol-acid reductoisomerase family. The cofactor is Mg(2+).

It carries out the reaction (2R)-2,3-dihydroxy-3-methylbutanoate + NADP(+) = (2S)-2-acetolactate + NADPH + H(+). It catalyses the reaction (2R,3R)-2,3-dihydroxy-3-methylpentanoate + NADP(+) = (S)-2-ethyl-2-hydroxy-3-oxobutanoate + NADPH + H(+). Its pathway is amino-acid biosynthesis; L-isoleucine biosynthesis; L-isoleucine from 2-oxobutanoate: step 2/4. The protein operates within amino-acid biosynthesis; L-valine biosynthesis; L-valine from pyruvate: step 2/4. Functionally, involved in the biosynthesis of branched-chain amino acids (BCAA). Catalyzes an alkyl-migration followed by a ketol-acid reduction of (S)-2-acetolactate (S2AL) to yield (R)-2,3-dihydroxy-isovalerate. In the isomerase reaction, S2AL is rearranged via a Mg-dependent methyl migration to produce 3-hydroxy-3-methyl-2-ketobutyrate (HMKB). In the reductase reaction, this 2-ketoacid undergoes a metal-dependent reduction by NADPH to yield (R)-2,3-dihydroxy-isovalerate. This chain is Ketol-acid reductoisomerase (NADP(+)), found in Aliarcobacter butzleri (strain RM4018) (Arcobacter butzleri).